The following is a 481-amino-acid chain: Ribulose bisphosphate carboxylase large chain (481 aa).

Residues 1–2 constitute a propeptide that is removed on maturation; that stretch reads MS. At proline 3 the chain carries N-acetylproline. Position 14 is an N6,N6,N6-trimethyllysine (lysine 14). Substrate is bound by residues asparagine 123 and threonine 173. Residue lysine 175 is the Proton acceptor of the active site. Substrate is bound at residue lysine 177. Mg(2+) is bound by residues lysine 201, aspartate 203, and glutamate 204. Lysine 201 bears the N6-carboxylysine mark. The Proton acceptor role is filled by histidine 294. 3 residues coordinate substrate: arginine 295, histidine 327, and serine 379.

It belongs to the RuBisCO large chain family. Type I subfamily. As to quaternary structure, heterohexadecamer of 8 large chains and 8 small chains; disulfide-linked. The disulfide link is formed within the large subunit homodimers. It depends on Mg(2+) as a cofactor. In terms of processing, the disulfide bond which can form in the large chain dimeric partners within the hexadecamer appears to be associated with oxidative stress and protein turnover.

It is found in the plastid. The enzyme catalyses 2 (2R)-3-phosphoglycerate + 2 H(+) = D-ribulose 1,5-bisphosphate + CO2 + H2O. It catalyses the reaction D-ribulose 1,5-bisphosphate + O2 = 2-phosphoglycolate + (2R)-3-phosphoglycerate + 2 H(+). In terms of biological role, ruBisCO catalyzes two reactions: the carboxylation of D-ribulose 1,5-bisphosphate, the primary event in carbon dioxide fixation, as well as the oxidative fragmentation of the pentose substrate in the photorespiration process. Both reactions occur simultaneously and in competition at the same active site. This chain is Ribulose bisphosphate carboxylase large chain, found in Cuscuta gronovii (Common dodder).